The sequence spans 450 residues: 3-keto-steroid reductase erg27 (450 aa).

NADP(+) contacts are provided by L25, T53, and K59. Catalysis depends on proton donor residues S215 and Y238. Residues Y238, K242, and T296 each coordinate NADP(+). Catalysis depends on K242, which acts as the Lowers pKa of active site Tyr.

It belongs to the short-chain dehydrogenases/reductases (SDR) family. ERG27 subfamily. In terms of assembly, heterotetramer of erg25, erg26, erg27 and erg28. Erg28 acts as a scaffold to tether erg27 and other 4,4-demethylation-related enzymes, forming a demethylation enzyme complex, in the endoplasmic reticulum.

It localises to the endoplasmic reticulum membrane. The protein localises to the lipid droplet. Its pathway is steroid metabolism; ergosterol biosynthesis. In terms of biological role, sterol-C4-methyl oxidase; part of the third module of ergosterol biosynthesis pathway that includes the late steps of the pathway. Erg27 is a catalytic component of the C-4 demethylation complex that catalyzes the conversion of 4,4-dimethylfecosterol into fecosterol via 4-methylfecosterol. The third module or late pathway involves the ergosterol synthesis itself through consecutive reactions that mainly occur in the endoplasmic reticulum (ER) membrane. Firstly, the squalene synthase erg9 catalyzes the condensation of 2 farnesyl pyrophosphate moieties to form squalene, which is the precursor of all steroids. Squalene synthase is crucial for balancing the incorporation of farnesyl diphosphate (FPP) into sterol and nonsterol isoprene synthesis. Secondly, squalene is converted into lanosterol by the consecutive action of the squalene epoxidase erg1 and the lanosterol synthase erg7. Then, the delta(24)-sterol C-methyltransferase erg6 methylates lanosterol at C-24 to produce eburicol. Eburicol is the substrate of the sterol 14-alpha demethylase encoded by cyp51A and cyp51B, to yield 4,4,24-trimethyl ergosta-8,14,24(28)-trienol. The C-14 reductase erg24 then reduces the C14=C15 double bond which leads to 4,4-dimethylfecosterol. A sequence of further demethylations at C-4, involving the C-4 demethylation complex containing the C-4 methylsterol oxidases erg25A or erg25B, the sterol-4-alpha-carboxylate 3-dehydrogenase erg26 and the 3-keto-steroid reductase erg27, leads to the production of fecosterol via 4-methylfecosterol. The C-8 sterol isomerase erg2 then catalyzes the reaction which results in unsaturation at C-7 in the B ring of sterols and thus converts fecosterol to episterol. The sterol-C5-desaturase erg3B then catalyzes the introduction of a C-5 double bond in the B ring to produce 5-dehydroepisterol. The 2 other sterol-C5-desaturases, erg3A and erg3C, seem to be less important in ergosterol biosynthesis. The C-22 sterol desaturase erg5 further converts 5-dehydroepisterol into ergosta-5,7,22,24(28)-tetraen-3beta-ol by forming the C-22(23) double bond in the sterol side chain. Finally, ergosta-5,7,22,24(28)-tetraen-3beta-ol is substrate of the C-24(28) sterol reductases erg4A and erg4B to produce ergosterol. Possible alternative sterol biosynthetic pathways might exist from fecosterol to ergosterol, depending on the activities of the erg3 isoforms. The chain is 3-keto-steroid reductase erg27 from Aspergillus fumigatus (strain ATCC MYA-4609 / CBS 101355 / FGSC A1100 / Af293) (Neosartorya fumigata).